A 250-amino-acid chain; its full sequence is Type III pantothenate kinase (250 aa).

6–13 is an ATP binding site; that stretch reads DVGNTNTV. 103–106 is a binding site for substrate; sequence GADR. D105 functions as the Proton acceptor in the catalytic mechanism. D125 serves as a coordination point for K(+). Residue T128 coordinates ATP. A substrate-binding site is contributed by T180.

This sequence belongs to the type III pantothenate kinase family. In terms of assembly, homodimer. Requires NH4(+) as cofactor. The cofactor is K(+).

The protein resides in the cytoplasm. It carries out the reaction (R)-pantothenate + ATP = (R)-4'-phosphopantothenate + ADP + H(+). The protein operates within cofactor biosynthesis; coenzyme A biosynthesis; CoA from (R)-pantothenate: step 1/5. In terms of biological role, catalyzes the phosphorylation of pantothenate (Pan), the first step in CoA biosynthesis. The sequence is that of Type III pantothenate kinase from Frankia casuarinae (strain DSM 45818 / CECT 9043 / HFP020203 / CcI3).